Reading from the N-terminus, the 530-residue chain is Ataxin-10 homolog (530 aa).

It belongs to the ataxin-10 family.

The protein resides in the cytoplasm. Functionally, may play a role in the regulation of cytokinesis. The sequence is that of Ataxin-10 homolog (CTR86) from Candida glabrata (strain ATCC 2001 / BCRC 20586 / JCM 3761 / NBRC 0622 / NRRL Y-65 / CBS 138) (Yeast).